The following is a 1214-amino-acid chain: Brassinosteroid LRR receptor kinase BRL3 (1214 aa).

The N-terminal stretch at 1-29 is a signal peptide; the sequence is MAAVRVVAPAPSVLLLVAAAVVLLHLARA. A glycan (N-linked (GlcNAc...) asparagine) is linked at Asn-61. Positions 69–76 match the Cys pair 1 motif; the sequence is CAWAGVSC. 22 LRR repeats span residues 103 to 127, 131 to 155, 156 to 177, 178 to 202, 204 to 228, 230 to 250, 252 to 276, 277 to 302, 303 to 325, 327 to 351, 353 to 375, 377 to 400, 401 to 427, 429 to 451, 452 to 476, 478 to 500, 502 to 525, 526 to 549, 550 to 572, 573 to 597, 599 to 621, and 650 to 673; these read LSAL…GSPR, PCAL…FLAS, CGGL…YPFP, PSLR…SLTG, HGIQ…PCTE, SVLD…FVAM, PANL…EFGG, CANL…LVDC, RRLE…TFLV, LQAL…LSIL, KTLV…SFGQ, RFLQ…VITN, ISSL…ASRC, LLEV…LCSS, LPSL…LSNC, NLES…ILFL, KLVD…CFNS, TALE…ITRC, VNLI…GFGN, LQNL…LGSC, NLIW…LAAQ, and GVLF…HLCS. 4 N-linked (GlcNAc...) asparagine glycosylation sites follow: Asn-145, Asn-163, Asn-197, and Asn-210. Asn-254, Asn-264, and Asn-279 each carry an N-linked (GlcNAc...) asparagine glycan. Residues Asn-400 and Asn-413 are each glycosylated (N-linked (GlcNAc...) asparagine). A glycan (N-linked (GlcNAc...) asparagine) is linked at Asn-466. Asn-512 and Asn-524 each carry an N-linked (GlcNAc...) asparagine glycan. Asn-561 carries N-linked (GlcNAc...) asparagine glycosylation. Tyr-678 lines the brassinolide pocket. LRR repeat units lie at residues 689 to 712, 713 to 736, 738 to 760, and 762 to 786; these read NGSM…SFGN, MTYL…AFTG, KGIG…GFGC, and HFLA…QLIT. The Cys pair 2 signature appears at 799–806; that stretch reads CGIPLNPC. A helical membrane pass occupies residues 829–849; the sequence is SVFLAVTLSVLILFSLLIIHY. The region spanning 913-1196 is the Protein kinase domain; that stretch reads FCAETLIGSG…FQVDSGSNFL (284 aa). ATP contacts are provided by residues 919 to 927, Lys-941, 987 to 989, 993 to 996, 1039 to 1044, and Asp-1057; these read IGSGGFGEV, EYM, SLDF, and DMKSSN. Catalysis depends on Asp-1039, which acts as the Proton acceptor.

It belongs to the protein kinase superfamily. Ser/Thr protein kinase family. In terms of tissue distribution, highly expressed in roots. Expressed at low levels in shoots.

It localises to the cell membrane. The enzyme catalyses L-seryl-[protein] + ATP = O-phospho-L-seryl-[protein] + ADP + H(+). The catalysed reaction is L-threonyl-[protein] + ATP = O-phospho-L-threonyl-[protein] + ADP + H(+). Functionally, may be involved in brassenosteroid (BR) perception in roots. The polypeptide is Brassinosteroid LRR receptor kinase BRL3 (Oryza sativa subsp. japonica (Rice)).